The sequence spans 253 residues: uncharacterized protein (253 aa).

The span at 200 to 209 shows a compositional bias: basic and acidic residues; the sequence is TGREHAHKGP. Disordered stretches follow at residues 200 to 225 and 234 to 253; these read TGRE…PNPA and QHSP…SAAT.

As to expression, most abundantly expressed in gastrointestinal tissues. Expressed at lower levels in kidney and placenta. Expressed in fetal brain, liver, placenta, kidney and lung.

This is an uncharacterized protein from Homo sapiens (Human).